A 210-amino-acid chain; its full sequence is Large ribosomal subunit protein uL4 (210 aa).

The protein belongs to the universal ribosomal protein uL4 family. In terms of assembly, part of the 50S ribosomal subunit.

Functionally, one of the primary rRNA binding proteins, this protein initially binds near the 5'-end of the 23S rRNA. It is important during the early stages of 50S assembly. It makes multiple contacts with different domains of the 23S rRNA in the assembled 50S subunit and ribosome. Forms part of the polypeptide exit tunnel. The protein is Large ribosomal subunit protein uL4 (rplD) of Thermus thermophilus.